A 380-amino-acid polypeptide reads, in one-letter code: Cytochrome b (380 aa).

4 helical membrane passes run 34–54 (FGSLLGVCLIAQIATGLFLAM), 78–99 (WLLRNLHANGASFFFICIYFHI), 114–134 (WNIGVILLFLVMATAFVGYVL), and 179–199 (FFTFHFILPFIIAAASMIHLL). Positions 84 and 98 each coordinate heme b. Heme b-binding residues include histidine 183 and histidine 197. Histidine 202 contributes to the a ubiquinone binding site. 4 helical membrane-spanning segments follow: residues 227 to 247 (YKDLLGFVIMLGALASLSTFA), 289 to 309 (LGGVLALLLSIMVLFLMPIIH), 321 to 341 (IAKTFFWALIANTAILTWIGG), and 348 to 368 (FITIGQIASGLYFLIFVLLIP).

This sequence belongs to the cytochrome b family. The cytochrome bc1 complex contains 3 respiratory subunits (MT-CYB, CYC1 and UQCRFS1), 2 core proteins (UQCRC1 and UQCRC2) and probably 6 low-molecular weight proteins. Requires heme b as cofactor.

Its subcellular location is the mitochondrion inner membrane. Component of the ubiquinol-cytochrome c reductase complex (complex III or cytochrome b-c1 complex) that is part of the mitochondrial respiratory chain. The b-c1 complex mediates electron transfer from ubiquinol to cytochrome c. Contributes to the generation of a proton gradient across the mitochondrial membrane that is then used for ATP synthesis. In Pelophylax nigromaculatus (Black-spotted frog), this protein is Cytochrome b (mt-cyb).